Reading from the N-terminus, the 610-residue chain is DEAD-box ATP-dependent RNA helicase 9, mitochondrial (610 aa).

The transit peptide at 1–66 (MISTVLRRSI…SSPFGVKVRD (66 aa)) directs the protein to the mitochondrion. A Q motif motif is present at residues 116 to 144 (LAIADLGISPEIVKALKGRGIEKLFPIQK). The Helicase ATP-binding domain occupies 147 to 321 (LEPAMEGRDM…KKYLNNPLTI (175 aa)). 160–167 (ARTGTGKT) lines the ATP pocket. The DEAD box signature appears at 269–272 (DEAD). The region spanning 350–494 (IIGPLVKEHG…ELPSIAVERG (145 aa)) is the Helicase C-terminal domain. Residues 542 to 557 (SGRSGGGGGSYGGSGG) show a composition bias toward gly residues. The disordered stretch occupies residues 542-610 (SGRSGGGGGS…FGSNDGKRSY (69 aa)). The segment covering 558–572 (SSSRYSGGSDRSSGF) has biased composition (low complexity). The span at 573–585 (GSFGSGGSSGGFG) shows a compositional bias: gly residues. Residues 586–596 (SDRSSQSSGRS) are compositionally biased toward low complexity.

It belongs to the DEAD box helicase family. DDX21/DDX50 subfamily.

It localises to the mitochondrion. It carries out the reaction ATP + H2O = ADP + phosphate + H(+). This Arabidopsis thaliana (Mouse-ear cress) protein is DEAD-box ATP-dependent RNA helicase 9, mitochondrial (RH9).